The primary structure comprises 748 residues: Polyribonucleotide nucleotidyltransferase (748 aa).

Mg(2+) contacts are provided by Asp-487 and Asp-493. The KH domain occupies 554-613; sequence PSTTTIKIDKDKIRDIIGPGGKVIKEICETSGAKIDISDDGTVSVYASDRDKLKVALDKI. One can recognise an S1 motif domain in the interval 623–691; it reads GEIFNGTVVK…NKGKAKLTIK (69 aa). Residues 691-748 are disordered; it reads KNADKDKSSNNTKPKTNVNNTKDNSEPEQRRDSSKKRAWNEDNNAETAEVITERKYFN. Low complexity predominate over residues 699 to 712; it reads SNNTKPKTNVNNTK. A compositionally biased stretch (basic and acidic residues) spans 713–722; that stretch reads DNSEPEQRRD.

Belongs to the polyribonucleotide nucleotidyltransferase family. The cofactor is Mg(2+).

It is found in the cytoplasm. The catalysed reaction is RNA(n+1) + phosphate = RNA(n) + a ribonucleoside 5'-diphosphate. Involved in mRNA degradation. Catalyzes the phosphorolysis of single-stranded polyribonucleotides processively in the 3'- to 5'-direction. This chain is Polyribonucleotide nucleotidyltransferase, found in Rickettsia africae (strain ESF-5).